Here is a 471-residue protein sequence, read N- to C-terminus: Coagulation factor IX (471 aa).

The signal sequence occupies residues 1 to 19; it reads MAKIPLILSFCLLEAFLGA. Positions 20–39 are excised as a propeptide; the sequence is ESTVFIENKEASTVLSRTRR. A Gla domain is found at 40–85; the sequence is GNSNRLEELIPGNLERECIEEKCSFEEAREVFENTEKTMEFWKIYI. Ca(2+) contacts are provided by N41, E46, E47, E54, E56, E59, E60, E65, E66, and E69. 4-carboxyglutamate is present on residues E46, E47, E54, E56, E59, E60, E65, E66, E69, E72, E75, and E79. Residue E54 participates in Mg(2+) binding. C57 and C62 are disulfide-bonded. Residue E59 coordinates Mg(2+). E65 contributes to the Mg(2+) binding site. E69 lines the Mg(2+) pocket. Ca(2+)-binding residues include E75, E79, D86, G87, and Q89. Residues E75 and E79 each coordinate Mg(2+). In terms of domain architecture, EGF-like 1; calcium-binding spans 86–122; the sequence is DGDQCNSNPCKNGAVCKDGVSSYECMCPPGYGGRNCE. Cystine bridges form between C90/C101, C95/C110, C112/C121, C127/C138, C134/C148, C150/C163, C171/C345, C262/C278, C392/C406, and C417/C445. A glycan (O-linked (Glc...) serine) is linked at S92. Position 103 (D103) interacts with Ca(2+). D103 is modified ((3R)-3-hydroxyaspartate). S107 is modified (phosphoserine). Residues 123-164 enclose the EGF-like 2 domain; the sequence is IDSTCATKNGGCEHFCRHDTPQKAVCSCASGYKLHEDGKSCK. The propeptide at 186 to 235 is activation peptide; sequence TENTIERWNITAHDEGDAHDEALDITEPPPPPTTSAAPAKIVPITKNDTR. One can recognise a Peptidase S1 domain in the interval 236–469; the sequence is VVGGYDSVKG…YVKWIRETTR (234 aa). Residue H277 is the Charge relay system of the active site. Ca(2+) contacts are provided by E291, N293, E296, and E301. The Charge relay system role is filled by D325. Catalysis depends on S421, which acts as the Charge relay system.

Belongs to the peptidase S1 family. In terms of assembly, heterodimer of a light chain and a heavy chain; disulfide-linked. In terms of processing, activated by factor XIa, which excises the activation peptide. The propeptide can also be removed by snake venom protease. Activated by coagulation factor VIIa-tissue factor (F7-F3) complex in calcium-dependent manner. The iron and 2-oxoglutarate dependent 3-hydroxylation of aspartate and asparagine is (R) stereospecific within EGF domains.

The protein resides in the secreted. The enzyme catalyses Selective cleavage of Arg-|-Ile bond in factor X to form factor Xa.. Its function is as follows. Factor IX is a vitamin K-dependent plasma protein that participates in the intrinsic pathway of blood coagulation by converting factor X to its active form in the presence of Ca(2+) ions, phospholipids, and factor VIIIa. This is Coagulation factor IX (F9) from Gallus gallus (Chicken).